We begin with the raw amino-acid sequence, 112 residues long: uncharacterized protein (112 aa).

The N-terminal 21 residues, 1 to 21 (MYLSAQLMRTVTASHLTLRAL), are a transit peptide targeting the mitochondrion.

It localises to the mitochondrion. This is an uncharacterized protein from Saccharomyces cerevisiae (strain ATCC 204508 / S288c) (Baker's yeast).